The chain runs to 467 residues: Xanthan biosynthesis protein XanB (467 aa).

The protein belongs to the mannose-6-phosphate isomerase type 2 family.

It catalyses the reaction D-mannose 6-phosphate = D-fructose 6-phosphate. The enzyme catalyses alpha-D-mannose 1-phosphate + GTP + H(+) = GDP-alpha-D-mannose + diphosphate. The protein operates within nucleotide-sugar biosynthesis; GDP-alpha-D-mannose biosynthesis; GDP-alpha-D-mannose from alpha-D-mannose 1-phosphate (GTP route): step 1/1. It functions in the pathway nucleotide-sugar biosynthesis; GDP-alpha-D-mannose biosynthesis; alpha-D-mannose 1-phosphate from D-fructose 6-phosphate: step 1/2. In terms of biological role, involved in xanthan production. The chain is Xanthan biosynthesis protein XanB (xanB) from Xanthomonas campestris pv. campestris (strain ATCC 33913 / DSM 3586 / NCPPB 528 / LMG 568 / P 25).